Here is a 233-residue protein sequence, read N- to C-terminus: Germin-like protein 3-7 (233 aa).

The N-terminal stretch at 1–35 (MSSSSSMECTGNMSAAPLLVLTVAVLAVLASTCAA) is a signal peptide. Cysteine 44 and cysteine 63 are joined by a disulfide. The region spanning 77–225 (AGLAAAGSTD…SFQVDAEIIK (149 aa)) is the Cupin type-1 domain. Mn(2+)-binding residues include histidine 125, histidine 127, glutamate 132, and histidine 171. N-linked (GlcNAc...) asparagine glycosylation is present at asparagine 178.

The protein belongs to the germin family. As to quaternary structure, oligomer (believed to be a pentamer but probably hexamer).

It localises to the secreted. It is found in the extracellular space. The protein resides in the apoplast. May play a role in plant defense. Probably has no oxalate oxidase activity even if the active site is conserved. The polypeptide is Germin-like protein 3-7 (GER7) (Oryza sativa subsp. japonica (Rice)).